The chain runs to 169 residues: 2-C-methyl-D-erythritol 2,4-cyclodiphosphate synthase (169 aa).

2 residues coordinate a divalent metal cation: Asp13 and His15. Residues 13 to 15 (DVH) and 39 to 40 (HS) contribute to the 4-CDP-2-C-methyl-D-erythritol 2-phosphate site. Residue His47 participates in a divalent metal cation binding. 4-CDP-2-C-methyl-D-erythritol 2-phosphate is bound by residues 61–63 (DIG), 66–70 (FPDTD), Phe144, and Arg147.

It belongs to the IspF family. As to quaternary structure, homotrimer. It depends on a divalent metal cation as a cofactor.

The catalysed reaction is 4-CDP-2-C-methyl-D-erythritol 2-phosphate = 2-C-methyl-D-erythritol 2,4-cyclic diphosphate + CMP. Its pathway is isoprenoid biosynthesis; isopentenyl diphosphate biosynthesis via DXP pathway; isopentenyl diphosphate from 1-deoxy-D-xylulose 5-phosphate: step 4/6. Involved in the biosynthesis of isopentenyl diphosphate (IPP) and dimethylallyl diphosphate (DMAPP), two major building blocks of isoprenoid compounds. Catalyzes the conversion of 4-diphosphocytidyl-2-C-methyl-D-erythritol 2-phosphate (CDP-ME2P) to 2-C-methyl-D-erythritol 2,4-cyclodiphosphate (ME-CPP) with a corresponding release of cytidine 5-monophosphate (CMP). In Cupriavidus necator (strain ATCC 17699 / DSM 428 / KCTC 22496 / NCIMB 10442 / H16 / Stanier 337) (Ralstonia eutropha), this protein is 2-C-methyl-D-erythritol 2,4-cyclodiphosphate synthase.